A 263-amino-acid polypeptide reads, in one-letter code: Isoprenyl transferase (263 aa).

Asp-38 is an active-site residue. Mg(2+) is bound at residue Asp-38. Substrate-binding positions include 39 to 42 (GNRR), His-55, and 83 to 85 (STD). Asn-86 serves as the catalytic Proton acceptor. Residues Phe-87, Arg-89, Arg-212, and 218-220 (RLS) contribute to the substrate site. A Mg(2+)-binding site is contributed by Glu-231.

Belongs to the UPP synthase family. In terms of assembly, homodimer. Requires Mg(2+) as cofactor.

Catalyzes the condensation of isopentenyl diphosphate (IPP) with allylic pyrophosphates generating different type of terpenoids. The polypeptide is Isoprenyl transferase (Thermus thermophilus (strain ATCC 27634 / DSM 579 / HB8)).